The primary structure comprises 202 residues: Holliday junction branch migration complex subunit RuvA (202 aa).

The tract at residues 1–64 (MIGRLRGSLA…EDAHLLYGFY (64 aa)) is domain I. Positions 65 to 143 (EKRERELFRE…AWEALPGTFT (79 aa)) are domain II. A flexible linker region spans residues 144 to 153 (LVSNGPNQAE). Positions 154–202 (PVASAESDAVSALISLGYKPQEASKAVSAIKEKDLSSADLIRRALKGMG) are domain III.

The protein belongs to the RuvA family. Homotetramer. Forms an RuvA(8)-RuvB(12)-Holliday junction (HJ) complex. HJ DNA is sandwiched between 2 RuvA tetramers; dsDNA enters through RuvA and exits via RuvB. An RuvB hexamer assembles on each DNA strand where it exits the tetramer. Each RuvB hexamer is contacted by two RuvA subunits (via domain III) on 2 adjacent RuvB subunits; this complex drives branch migration. In the full resolvosome a probable DNA-RuvA(4)-RuvB(12)-RuvC(2) complex forms which resolves the HJ.

It is found in the cytoplasm. The RuvA-RuvB-RuvC complex processes Holliday junction (HJ) DNA during genetic recombination and DNA repair, while the RuvA-RuvB complex plays an important role in the rescue of blocked DNA replication forks via replication fork reversal (RFR). RuvA specifically binds to HJ cruciform DNA, conferring on it an open structure. The RuvB hexamer acts as an ATP-dependent pump, pulling dsDNA into and through the RuvAB complex. HJ branch migration allows RuvC to scan DNA until it finds its consensus sequence, where it cleaves and resolves the cruciform DNA. The protein is Holliday junction branch migration complex subunit RuvA of Pseudomonas syringae pv. syringae (strain B728a).